The sequence spans 1129 residues: Egg-laying defective protein 27 (1129 aa).

A compositionally biased stretch (polar residues) spans 1-11; sequence MSRFDSQCSSE. The disordered stretch occupies residues 1–43; sequence MSRFDSQCSSEDVNKEDECVPSSSEDSQDGVSSPMENDDEPEF. Residues 22-33 are compositionally biased toward low complexity; sequence SSSEDSQDGVSS. The BAH domain occupies 87–223; it reads TLYRLRDSVF…QDSTKLASTH (137 aa). Residues 224–327 form the ELM2 domain; sequence YAIRVGTSFQ…DALSELNAND (104 aa). An SANT domain is found at 332 to 384; the sequence is TDVDNMTQDDAKKFAKGIKQLGKNFSRIHRELLPHHSREQLVSYYYLWKKTPE. The tract at residues 388-434 is disordered; the sequence is PKQAARRVNPTSIKRPTKEKVKASRPTSTEYLDFDSASESDVENNGP. The segment covering 419-429 has biased composition (acidic residues); that stretch reads LDFDSASESDV. The GATA-type; atypical zinc finger occupies 439–485; it reads CHHCYGAESKDWHHANGLLLCTDCRLHYKKYGQLRQIANRPSQVPAC. Disordered regions lie at residues 488–636, 693–717, 790–814, 899–950, and 982–1040; these read KRSN…DPMP, RDET…SPED, QQNQ…QQAQ, MIAE…HAAA, and MAAQ…REHA. 2 stretches are compositionally biased toward polar residues: residues 525–545 and 561–573; these read PSTV…TKKL and VINN…SSEE. Composition is skewed to acidic residues over residues 613–634 and 705–717; these read SYDD…DDDP and KDDE…SPED. Positions 899–914 are enriched in low complexity; that stretch reads MIAEQQQQQRHAAAQQ. The segment covering 915–932 has biased composition (basic and acidic residues); sequence LREREQREQRERERERQH. Composition is skewed to low complexity over residues 933-950 and 983-999; these read QQQA…HAAA and AAQQ…AQAQ. Residues 1000–1040 show a composition bias toward basic and acidic residues; that stretch reads RDQERERREREAREREAAREREREQAAREAAARDQAAREHA.

As to quaternary structure, interacts with ceh-6, sem-4 and sox-2. Interacts with wdr-5.1. In terms of tissue distribution, expression detected in anterior intestine and head region.

It is found in the nucleus. In terms of biological role, transcription factor which promotes stress survival and delays aging. Required for cell cycle progression and development of the mesodermal and endodermal embryonic lineages. Required for normal T-cell polarity, for correct migration of QL neuroblast descendants and other cells, for embryonic patterning and for the embryonic expression of hlh-8. Also required for the transdifferentiation of the Y rectal epithelial cell to the PDA motor neuron during larval development. The sequence is that of Egg-laying defective protein 27 from Caenorhabditis elegans.